A 184-amino-acid polypeptide reads, in one-letter code: ATP synthase subunit b, chloroplastic (184 aa).

Residues 27–49 (LATNPINLSVVLGVLIFFGKGVL) form a helical membrane-spanning segment.

This sequence belongs to the ATPase B chain family. As to quaternary structure, F-type ATPases have 2 components, F(1) - the catalytic core - and F(0) - the membrane proton channel. F(1) has five subunits: alpha(3), beta(3), gamma(1), delta(1), epsilon(1). F(0) has four main subunits: a(1), b(1), b'(1) and c(10-14). The alpha and beta chains form an alternating ring which encloses part of the gamma chain. F(1) is attached to F(0) by a central stalk formed by the gamma and epsilon chains, while a peripheral stalk is formed by the delta, b and b' chains.

It is found in the plastid. It localises to the chloroplast thylakoid membrane. In terms of biological role, f(1)F(0) ATP synthase produces ATP from ADP in the presence of a proton or sodium gradient. F-type ATPases consist of two structural domains, F(1) containing the extramembraneous catalytic core and F(0) containing the membrane proton channel, linked together by a central stalk and a peripheral stalk. During catalysis, ATP synthesis in the catalytic domain of F(1) is coupled via a rotary mechanism of the central stalk subunits to proton translocation. Its function is as follows. Component of the F(0) channel, it forms part of the peripheral stalk, linking F(1) to F(0). This chain is ATP synthase subunit b, chloroplastic, found in Eucalyptus globulus subsp. globulus (Tasmanian blue gum).